The following is a 262-amino-acid chain: Tryptophan synthase alpha chain (262 aa).

Active-site proton acceptor residues include E47 and D58.

The protein belongs to the TrpA family. In terms of assembly, tetramer of two alpha and two beta chains.

It catalyses the reaction (1S,2R)-1-C-(indol-3-yl)glycerol 3-phosphate + L-serine = D-glyceraldehyde 3-phosphate + L-tryptophan + H2O. Its pathway is amino-acid biosynthesis; L-tryptophan biosynthesis; L-tryptophan from chorismate: step 5/5. In terms of biological role, the alpha subunit is responsible for the aldol cleavage of indoleglycerol phosphate to indole and glyceraldehyde 3-phosphate. The protein is Tryptophan synthase alpha chain of Chromobacterium violaceum (strain ATCC 12472 / DSM 30191 / JCM 1249 / CCUG 213 / NBRC 12614 / NCIMB 9131 / NCTC 9757 / MK).